Here is a 198-residue protein sequence, read N- to C-terminus: Tumor necrosis factor receptor superfamily member 22 (198 aa).

Over 1–20 (MFGFFCSLVSSLSRWFLWRR) the chain is Cytoplasmic. The helical; Signal-anchor for type II membrane protein transmembrane segment at 21–41 (LLLLLLLLLLNLPLQVKFAML) threads the bilayer. The Extracellular segment spans residues 42-198 (ELHSFKCPAG…SVVVFRIIRR (157 aa)). 3 TNFR-Cys repeats span residues 47–82 (KCPA…QGQC), 84–124 (KCHP…DRKC), and 125–165 (QCRT…NTVC). Disulfide bonds link cysteine 48–cysteine 59, cysteine 60–cysteine 73, cysteine 63–cysteine 82, cysteine 85–cysteine 100, cysteine 103–cysteine 116, cysteine 106–cysteine 124, cysteine 126–cysteine 141, cysteine 144–cysteine 157, and cysteine 147–cysteine 165. Residue asparagine 62 is glycosylated (N-linked (GlcNAc...) asparagine). N-linked (GlcNAc...) asparagine glycosylation occurs at asparagine 158.

In terms of tissue distribution, ubiquitous.

The protein resides in the cell membrane. The protein localises to the secreted. In terms of biological role, receptor for the cytotoxic ligand TNFSF10/TRAIL. Lacks a cytoplasmic death domain and hence is not capable of inducing apoptosis. Protects cells against TRAIL mediated apoptosis possibly through ligand competition. Cannot induce the NF-kappa-B pathway. This is Tumor necrosis factor receptor superfamily member 22 (Tnfrsf22) from Mus musculus (Mouse).